Consider the following 229-residue polypeptide: Large ribosomal subunit protein uL1 (229 aa).

This sequence belongs to the universal ribosomal protein uL1 family. In terms of assembly, part of the 50S ribosomal subunit.

Functionally, binds directly to 23S rRNA. The L1 stalk is quite mobile in the ribosome, and is involved in E site tRNA release. In terms of biological role, protein L1 is also a translational repressor protein, it controls the translation of the L11 operon by binding to its mRNA. This chain is Large ribosomal subunit protein uL1, found in Rhodopseudomonas palustris (strain BisB5).